A 196-amino-acid chain; its full sequence is Small ribosomal subunit protein uS4c (196 aa).

Residues 16-36 (GALPGLTRKTPKSGSNLKKKF) are disordered. An S4 RNA-binding domain is found at 89-169 (MRLDNILFRL…LPKHLTIDTL (81 aa)).

The protein belongs to the universal ribosomal protein uS4 family. In terms of assembly, part of the 30S ribosomal subunit. Contacts protein S5. The interaction surface between S4 and S5 is involved in control of translational fidelity.

It is found in the plastid. The protein resides in the chloroplast. Its function is as follows. One of the primary rRNA binding proteins, it binds directly to 16S rRNA where it nucleates assembly of the body of the 30S subunit. In terms of biological role, with S5 and S12 plays an important role in translational accuracy. The sequence is that of Small ribosomal subunit protein uS4c (rps4) from Cinna latifolia (Drooping woodreed).